The chain runs to 104 residues: Urease subunit beta (104 aa).

This sequence belongs to the urease beta subunit family. Heterotrimer of UreA (gamma), UreB (beta) and UreC (alpha) subunits. Three heterotrimers associate to form the active enzyme.

It is found in the cytoplasm. The catalysed reaction is urea + 2 H2O + H(+) = hydrogencarbonate + 2 NH4(+). It participates in nitrogen metabolism; urea degradation; CO(2) and NH(3) from urea (urease route): step 1/1. This is Urease subunit beta from Rhodococcus opacus (strain B4).